The following is a 261-amino-acid chain: 14-3-3 protein 9 (261 aa).

The disordered stretch occupies residues Pro239–Glu261.

This sequence belongs to the 14-3-3 family. In terms of assembly, homodimer.

This Solanum lycopersicum (Tomato) protein is 14-3-3 protein 9 (TFT9).